We begin with the raw amino-acid sequence, 323 residues long: Germination protease (323 aa).

A propeptide spanning residues 1 to 6 is cleaved from the precursor; the sequence is MSVRTD.

The protein belongs to the peptidase A25 family. As to quaternary structure, homotetramer. Post-translationally, autoproteolytically processed. The inactive tetrameric zymogen termed p46 autoprocesses to a smaller form termed p41, which is active only during spore germination.

The catalysed reaction is Endopeptidase action with P4 Glu or Asp, P1 preferably Glu &gt; Asp, P1' hydrophobic and P2' Ala.. Functionally, initiates the rapid degradation of small, acid-soluble proteins during spore germination. This chain is Germination protease, found in Clostridium tetani (strain Massachusetts / E88).